Here is a 126-residue protein sequence, read N- to C-terminus: Fluoride-specific ion channel FluC (126 aa).

4 helical membrane-spanning segments follow: residues 1 to 21 (MTAT…RFHA), 33 to 53 (AVFP…MGVL), 72 to 92 (VGVL…ALLV), and 97 to 117 (IGLA…GLFL). Residues glycine 76 and threonine 79 each contribute to the Na(+) site.

It belongs to the fluoride channel Fluc/FEX (TC 1.A.43) family.

Its subcellular location is the cell inner membrane. It catalyses the reaction fluoride(in) = fluoride(out). With respect to regulation, na(+) is not transported, but it plays an essential structural role and its presence is essential for fluoride channel function. Its function is as follows. Fluoride-specific ion channel. Important for reducing fluoride concentration in the cell, thus reducing its toxicity. The chain is Fluoride-specific ion channel FluC from Novosphingobium aromaticivorans (strain ATCC 700278 / DSM 12444 / CCUG 56034 / CIP 105152 / NBRC 16084 / F199).